A 167-amino-acid chain; its full sequence is uncharacterized protein (167 aa).

This is an uncharacterized protein from Acanthamoeba polyphaga (Amoeba).